We begin with the raw amino-acid sequence, 56 residues long: Ovomucoid (56 aa).

Positions 6 to 56 (VDCSEYPKPACTLEYRPLCGSDNKTYANKCNFCNAVVESNGTLTLSHFGKC) constitute a Kazal-like domain. Disulfide bonds link Cys8/Cys38, Cys16/Cys35, and Cys24/Cys56. A glycan (N-linked (GlcNAc...) asparagine) is linked at Asn45.

It is found in the secreted. The protein is Ovomucoid of Callipepla californica (California quail).